The following is a 90-amino-acid chain: Small ribosomal subunit protein bS16 (90 aa).

This sequence belongs to the bacterial ribosomal protein bS16 family.

The polypeptide is Small ribosomal subunit protein bS16 (Geobacillus kaustophilus (strain HTA426)).